A 451-amino-acid chain; its full sequence is G-protein coupled receptor 61 (451 aa).

Over residues Met-1–Ser-14 the composition is skewed to low complexity. The interval Met-1–Val-31 is disordered. Residues Met-1–Val-44 are Extracellular-facing. N-linked (GlcNAc...) asparagine glycosylation is present at Asn-12. The helical transmembrane segment at Ala-45–Ile-67 threads the bilayer. The Cytoplasmic segment spans residues Ala-68–Lys-75. Residues Phe-76–Met-98 traverse the membrane as a helical segment. The Extracellular portion of the chain corresponds to Leu-99–Glu-112. Residues Val-113–Ala-135 form a helical membrane-spanning segment. Over Ile-136–Thr-155 the chain is Cytoplasmic. A helical membrane pass occupies residues Leu-156–Val-178. At Leu-179 to Gln-206 the chain is on the extracellular side. Residues Leu-207 to Cys-229 traverse the membrane as a helical segment. The Cytoplasmic portion of the chain corresponds to Ser-230–Val-287. The helical transmembrane segment at Val-288 to Val-310 threads the bilayer. The Extracellular portion of the chain corresponds to Ala-311 to Ser-324. The helical transmembrane segment at Val-325–Leu-344 threads the bilayer. The Cytoplasmic segment spans residues Asn-345 to Ser-451.

Belongs to the G-protein coupled receptor 1 family. As to quaternary structure, forms heterodimer with MTNR1B. Interacts with ARRB1 and ARRB2 in a spontaneous and agonist-independent manner; leading to the internalization of GPR61 in the endosomal compartment. As to expression, expressed in brain; detected in frontal and temporal lobes, occipital pole, amygdala and hippocampus. Also expressed in testis and T cells, B cells, and monocyte. Low expression in many other tissues. Widely expressed in the hippocampus (at protein level).

The protein resides in the cell membrane. The protein localises to the endosome membrane. Functionally, orphan G-protein coupled receptor. Constitutively activates the G(s)-alpha/cAMP signaling pathway. Shows a reciprocal regulatory interaction with the melatonin receptor MTNR1B most likely through receptor heteromerization. May be involved in the regulation of food intake and body weight. The protein is G-protein coupled receptor 61 (GPR61) of Homo sapiens (Human).